Reading from the N-terminus, the 144-residue chain is 3-hydroxyacyl-[acyl-carrier-protein] dehydratase FabZ (144 aa).

Histidine 48 is an active-site residue.

The protein belongs to the thioester dehydratase family. FabZ subfamily.

It is found in the cytoplasm. The catalysed reaction is a (3R)-hydroxyacyl-[ACP] = a (2E)-enoyl-[ACP] + H2O. Functionally, involved in unsaturated fatty acids biosynthesis. Catalyzes the dehydration of short chain beta-hydroxyacyl-ACPs and long chain saturated and unsaturated beta-hydroxyacyl-ACPs. The sequence is that of 3-hydroxyacyl-[acyl-carrier-protein] dehydratase FabZ from Bacillus thuringiensis (strain Al Hakam).